We begin with the raw amino-acid sequence, 149 residues long: Transcriptional repressor NrdR (149 aa).

A zinc finger lies at 3-34 (CPFCGNRDTNVRDSRSVNEGTFIKRRRFCGEC). In terms of domain architecture, ATP-cone spans 49 to 139 (IKVIKKNGSC…VYMNFENEKD (91 aa)).

It belongs to the NrdR family. The cofactor is Zn(2+).

In terms of biological role, negatively regulates transcription of bacterial ribonucleotide reductase nrd genes and operons by binding to NrdR-boxes. This chain is Transcriptional repressor NrdR, found in Neorickettsia sennetsu (strain ATCC VR-367 / Miyayama) (Ehrlichia sennetsu).